The sequence spans 399 residues: S-adenosylmethionine synthase (399 aa).

ATP is bound at residue histidine 19. Aspartate 21 contacts Mg(2+). Glutamate 47 lines the K(+) pocket. L-methionine contacts are provided by glutamate 60 and glutamine 103. The segment at 103–113 (QSPDIAQGVNQ) is flexible loop. ATP is bound by residues 179 to 181 (DGK), 246 to 247 (RF), aspartate 255, 261 to 262 (RK), alanine 278, and lysine 282. Aspartate 255 provides a ligand contact to L-methionine. L-methionine is bound at residue lysine 286.

The protein belongs to the AdoMet synthase family. As to quaternary structure, homotetramer; dimer of dimers. The cofactor is Mg(2+). Requires K(+) as cofactor.

Its subcellular location is the cytoplasm. The enzyme catalyses L-methionine + ATP + H2O = S-adenosyl-L-methionine + phosphate + diphosphate. It functions in the pathway amino-acid biosynthesis; S-adenosyl-L-methionine biosynthesis; S-adenosyl-L-methionine from L-methionine: step 1/1. Its function is as follows. Catalyzes the formation of S-adenosylmethionine (AdoMet) from methionine and ATP. The overall synthetic reaction is composed of two sequential steps, AdoMet formation and the subsequent tripolyphosphate hydrolysis which occurs prior to release of AdoMet from the enzyme. The sequence is that of S-adenosylmethionine synthase from Halalkalibacterium halodurans (strain ATCC BAA-125 / DSM 18197 / FERM 7344 / JCM 9153 / C-125) (Bacillus halodurans).